The following is a 153-amino-acid chain: Small ribosomal subunit protein bS16 (153 aa).

A disordered region spans residues 114-153 (ENEPVGEAITPKKKKAKAEDAEAAADAPAEAAAESEAADK). Low complexity predominate over residues 137 to 153 (AADAPAEAAAESEAADK).

The protein belongs to the bacterial ribosomal protein bS16 family.

In Rhodococcus jostii (strain RHA1), this protein is Small ribosomal subunit protein bS16.